The following is a 257-amino-acid chain: UPF0758 protein Bcenmc03_2526 (257 aa).

Residues M1–G53 form a disordered region. Basic and acidic residues predominate over residues P37–E51. Residues Q135 to L257 form the MPN domain. 3 residues coordinate Zn(2+): H206, H208, and D219. The JAMM motif signature appears at H206 to D219.

Belongs to the UPF0758 family.

The sequence is that of UPF0758 protein Bcenmc03_2526 from Burkholderia orbicola (strain MC0-3).